The primary structure comprises 812 residues: DNA translocase FtsK 1 (812 aa).

The segment covering 1–11 (MTEKSHKKTAK) has biased composition (basic residues). Positions 1–36 (MTEKSHKKTAKGRAGSPSPTSARNKKADNGARGNKV) are disordered. Residues 25 to 36 (KKADNGARGNKV) are compositionally biased toward basic and acidic residues. The next 5 helical transmembrane spans lie at 63–83 (IGDALWLMGLAATLYLVISLI), 116–136 (VGYYLFGWSFWWWIAAACVML), 156–176 (IAAAALFVLTVFSPVLEYFVL), 184–204 (LPVGAGGMVGIRVGAVFAWLL), and 210–230 (LLIILVVLLLSLSLLVQISWL). Topologically, residues 231 to 812 (EFLNGAGRAV…RKILAHKDHL (582 aa)) are cytoplasmic. Residues 461–670 (GTPVVGDLAK…FTVQSKIDSR (210 aa)) form the FtsK domain. 481-486 (GSGKSV) contributes to the ATP binding site.

It belongs to the FtsK/SpoIIIE/SftA family. As to quaternary structure, homohexamer. Forms a ring that surrounds DNA.

The protein localises to the cell inner membrane. In terms of biological role, essential cell division protein that coordinates cell division and chromosome segregation. The N-terminus is involved in assembly of the cell-division machinery. The C-terminus functions as a DNA motor that moves dsDNA in an ATP-dependent manner towards the dif recombination site, which is located within the replication terminus region. Translocation stops specifically at Xer-dif sites, where FtsK interacts with the Xer recombinase, allowing activation of chromosome unlinking by recombination. FtsK orienting polar sequences (KOPS) guide the direction of DNA translocation. FtsK can remove proteins from DNA as it translocates, but translocation stops specifically at XerCD-dif site, thereby preventing removal of XerC and XerD from dif. The chain is DNA translocase FtsK 1 (ftsK1) from Neisseria meningitidis serogroup A / serotype 4A (strain DSM 15465 / Z2491).